A 172-amino-acid polypeptide reads, in one-letter code: MPLLDSFTVDHTRMNAPAVRVAKTMQTPKGDTITVFDLRFCRPNMDILSERGIHTLEHLYAGFMRNHLNSERVEIIDISPMGCRTGFYMSLIGTPSEQDVAAGWTAAMEDVLNVESQDQIPELNEYQCGTYSMHSLEEAKDIAKTILAEGINVNKNDELALPESMLKELDVK.

3 residues coordinate Fe cation: His-54, His-58, and Cys-128.

The protein belongs to the LuxS family. As to quaternary structure, homodimer. It depends on Fe cation as a cofactor.

The catalysed reaction is S-(5-deoxy-D-ribos-5-yl)-L-homocysteine = (S)-4,5-dihydroxypentane-2,3-dione + L-homocysteine. In terms of biological role, involved in the synthesis of autoinducer 2 (AI-2) which is secreted by bacteria and is used to communicate both the cell density and the metabolic potential of the environment. The regulation of gene expression in response to changes in cell density is called quorum sensing. Catalyzes the transformation of S-ribosylhomocysteine (RHC) to homocysteine (HC) and 4,5-dihydroxy-2,3-pentadione (DPD). The sequence is that of S-ribosylhomocysteine lyase from Photobacterium profundum (strain SS9).